The following is a 968-amino-acid chain: RNA polymerase-associated protein RapA (968 aa).

Positions 164–334 constitute a Helicase ATP-binding domain; sequence DVGRRHAPRV…FARLRLLDPN (171 aa). 177 to 184 is an ATP binding site; the sequence is DEVGLGKT. The DEAH box motif lies at 280 to 283; it reads DEAH. A Helicase C-terminal domain is found at 490–662; sequence RVEWLMGYLT…YLASPDQTEG (173 aa).

The protein belongs to the SNF2/RAD54 helicase family. RapA subfamily. As to quaternary structure, interacts with the RNAP. Has a higher affinity for the core RNAP than for the holoenzyme. Its ATPase activity is stimulated by binding to RNAP.

Its function is as follows. Transcription regulator that activates transcription by stimulating RNA polymerase (RNAP) recycling in case of stress conditions such as supercoiled DNA or high salt concentrations. Probably acts by releasing the RNAP, when it is trapped or immobilized on tightly supercoiled DNA. Does not activate transcription on linear DNA. Probably not involved in DNA repair. This chain is RNA polymerase-associated protein RapA, found in Shigella flexneri serotype 5b (strain 8401).